A 91-amino-acid chain; its full sequence is Acylphosphatase (91 aa).

The 87-residue stretch at 3–89 (AKHLILSGRV…PAEPGFVKRA (87 aa)) folds into the Acylphosphatase-like domain. Catalysis depends on residues Arg18 and Asn36.

The protein belongs to the acylphosphatase family.

It carries out the reaction an acyl phosphate + H2O = a carboxylate + phosphate + H(+). This is Acylphosphatase (acyP) from Acidiphilium cryptum (strain JF-5).